A 274-amino-acid polypeptide reads, in one-letter code: Dermonecrotic toxin LarSicTox-alphaIB2bii (274 aa).

Histidine 3 is an active-site residue. Mg(2+) contacts are provided by glutamate 23 and aspartate 25. Catalysis depends on histidine 39, which acts as the Nucleophile. 2 disulfide bridges follow: cysteine 43–cysteine 49 and cysteine 45–cysteine 188. Residue aspartate 83 coordinates Mg(2+). Asparagine 251 carries an N-linked (GlcNAc...) asparagine glycan.

Belongs to the arthropod phospholipase D family. Class II subfamily. The cofactor is Mg(2+). In terms of tissue distribution, expressed by the venom gland.

It is found in the secreted. The enzyme catalyses an N-(acyl)-sphingosylphosphocholine = an N-(acyl)-sphingosyl-1,3-cyclic phosphate + choline. It catalyses the reaction an N-(acyl)-sphingosylphosphoethanolamine = an N-(acyl)-sphingosyl-1,3-cyclic phosphate + ethanolamine. It carries out the reaction a 1-acyl-sn-glycero-3-phosphocholine = a 1-acyl-sn-glycero-2,3-cyclic phosphate + choline. The catalysed reaction is a 1-acyl-sn-glycero-3-phosphoethanolamine = a 1-acyl-sn-glycero-2,3-cyclic phosphate + ethanolamine. In terms of biological role, dermonecrotic toxins cleave the phosphodiester linkage between the phosphate and headgroup of certain phospholipids (sphingolipid and lysolipid substrates), forming an alcohol (often choline) and a cyclic phosphate. This toxin acts on sphingomyelin (SM). It may also act on ceramide phosphoethanolamine (CPE), lysophosphatidylcholine (LPC) and lysophosphatidylethanolamine (LPE), but not on lysophosphatidylserine (LPS), and lysophosphatidylglycerol (LPG). It acts by transphosphatidylation, releasing exclusively cyclic phosphate products as second products. Induces dermonecrosis, hemolysis, increased vascular permeability, edema, inflammatory response, and platelet aggregation. The polypeptide is Dermonecrotic toxin LarSicTox-alphaIB2bii (Loxosceles arizonica (Arizona brown spider)).